A 33-amino-acid polypeptide reads, in one-letter code: Brevinin-2HSb (33 aa).

The cysteines at positions 27 and 33 are disulfide-linked.

Expressed by the skin glands.

Its subcellular location is the secreted. Its function is as follows. Has antibacterial activity against the Gram-positive bacterium S.aureus ATCC 25923 and the Gram-negative bacterium E.coli ATCC 25726. This Odorrana hosii (Hose's rock frog) protein is Brevinin-2HSb.